A 62-amino-acid polypeptide reads, in one-letter code: Protein CYSTEINE-RICH TRANSMEMBRANE MODULE 2 (62 aa).

2 helical membrane-spanning segments follow: residues 23-39 (VAVAATRSASVVAAAFD) and 33-53 (VVAAAFDFYICIIISTLLSLI).

The protein belongs to the CYSTM1 family. As to quaternary structure, heterodimers. Binds weakly to CYSTM7 and WIH1/CYSTM13. Mostly expressed in stems, siliques, leaves and flowers and, to a lower extent, in roots.

The protein resides in the cell membrane. Its subcellular location is the nucleus. The protein localises to the secreted. It localises to the cell wall. Its function is as follows. Involved in resistance to abiotic stress. Confers resistance to heavy metal ions (e.g. cadmium (CdCl(2)) and copper (CuCl(2))) by chelating them at the plasma membrane of root cells, thus stopping their entry and reducing their accumulation. The polypeptide is Protein CYSTEINE-RICH TRANSMEMBRANE MODULE 2 (Arabidopsis thaliana (Mouse-ear cress)).